A 232-amino-acid chain; its full sequence is Glycerol-3-phosphate acyltransferase (232 aa).

6 consecutive transmembrane segments (helical) span residues 4-24 (FLAI…IIAG), 56-76 (AVTL…VAFF), 90-110 (IALN…TVFA), 124-144 (MLIG…ILAI), 147-167 (TRYV…IIAI), and 191-211 (SLDY…IYTH).

It belongs to the PlsY family. Probably interacts with PlsX.

Its subcellular location is the cell inner membrane. It catalyses the reaction an acyl phosphate + sn-glycerol 3-phosphate = a 1-acyl-sn-glycero-3-phosphate + phosphate. The protein operates within lipid metabolism; phospholipid metabolism. Its function is as follows. Catalyzes the transfer of an acyl group from acyl-phosphate (acyl-PO(4)) to glycerol-3-phosphate (G3P) to form lysophosphatidic acid (LPA). This enzyme utilizes acyl-phosphate as fatty acyl donor, but not acyl-CoA or acyl-ACP. This Chlorobaculum parvum (strain DSM 263 / NCIMB 8327) (Chlorobium vibrioforme subsp. thiosulfatophilum) protein is Glycerol-3-phosphate acyltransferase.